Here is a 460-residue protein sequence, read N- to C-terminus: Bifunctional protein GlmU (460 aa).

Positions 1-229 (MSNYAIILAA…FEESLGVNDR (229 aa)) are pyrophosphorylase. Residues 8-11 (LAAG), K22, Q72, and 77-78 (GT) contribute to the UDP-N-acetyl-alpha-D-glucosamine site. D102 is a Mg(2+) binding site. UDP-N-acetyl-alpha-D-glucosamine is bound by residues G139, E154, N169, and N227. Residue N227 participates in Mg(2+) binding. The tract at residues 230–250 (VALATAEDVMRRRINKTHMIN) is linker. The segment at 251 to 460 (GVTFQNPNAT…KKPHHPSQQK (210 aa)) is N-acetyltransferase. R332 and K350 together coordinate UDP-N-acetyl-alpha-D-glucosamine. H362 (proton acceptor) is an active-site residue. UDP-N-acetyl-alpha-D-glucosamine is bound by residues Y365 and N376. Acetyl-CoA contacts are provided by residues A379, 385–386 (NY), S404, A422, and R439.

It in the N-terminal section; belongs to the N-acetylglucosamine-1-phosphate uridyltransferase family. The protein in the C-terminal section; belongs to the transferase hexapeptide repeat family. As to quaternary structure, homotrimer. It depends on Mg(2+) as a cofactor.

Its subcellular location is the cytoplasm. The enzyme catalyses alpha-D-glucosamine 1-phosphate + acetyl-CoA = N-acetyl-alpha-D-glucosamine 1-phosphate + CoA + H(+). The catalysed reaction is N-acetyl-alpha-D-glucosamine 1-phosphate + UTP + H(+) = UDP-N-acetyl-alpha-D-glucosamine + diphosphate. The protein operates within nucleotide-sugar biosynthesis; UDP-N-acetyl-alpha-D-glucosamine biosynthesis; N-acetyl-alpha-D-glucosamine 1-phosphate from alpha-D-glucosamine 6-phosphate (route II): step 2/2. It functions in the pathway nucleotide-sugar biosynthesis; UDP-N-acetyl-alpha-D-glucosamine biosynthesis; UDP-N-acetyl-alpha-D-glucosamine from N-acetyl-alpha-D-glucosamine 1-phosphate: step 1/1. It participates in bacterial outer membrane biogenesis; LPS lipid A biosynthesis. Functionally, catalyzes the last two sequential reactions in the de novo biosynthetic pathway for UDP-N-acetylglucosamine (UDP-GlcNAc). The C-terminal domain catalyzes the transfer of acetyl group from acetyl coenzyme A to glucosamine-1-phosphate (GlcN-1-P) to produce N-acetylglucosamine-1-phosphate (GlcNAc-1-P), which is converted into UDP-GlcNAc by the transfer of uridine 5-monophosphate (from uridine 5-triphosphate), a reaction catalyzed by the N-terminal domain. The sequence is that of Bifunctional protein GlmU from Streptococcus thermophilus (strain ATCC BAA-491 / LMD-9).